The primary structure comprises 149 residues: Calmodulin (149 aa).

At Ala-2 the chain carries N-acetylalanine. EF-hand domains follow at residues 8 to 43 (EQIA…LGQN), 44 to 79 (PTEA…KMKD), 81 to 116 (DSEE…LGEK), and 117 to 149 (LTDE…MTSK). Residues Asp-21, Asp-23, Asp-25, Thr-27, Glu-32, Asp-57, Asp-59, Asn-61, Thr-63, Glu-68, Asp-94, Asp-96, Asn-98, and Glu-105 each contribute to the Ca(2+) site. At Lys-116 the chain carries N6,N6,N6-trimethyllysine. Residues Asp-130, Asp-132, Asp-134, Gln-136, and Glu-141 each contribute to the Ca(2+) site.

The protein belongs to the calmodulin family.

Calmodulin mediates the control of a large number of enzymes, ion channels and other proteins by Ca(2+). Among the enzymes to be stimulated by the calmodulin-Ca(2+) complex are a number of protein kinases and phosphatases. This Metridium senile (Brown sea anemone) protein is Calmodulin.